A 471-amino-acid polypeptide reads, in one-letter code: UDP-N-acetylmuramate--L-alanine ligase (471 aa).

114-120 is an ATP binding site; it reads GTHGKTT.

Belongs to the MurCDEF family.

The protein localises to the cytoplasm. It carries out the reaction UDP-N-acetyl-alpha-D-muramate + L-alanine + ATP = UDP-N-acetyl-alpha-D-muramoyl-L-alanine + ADP + phosphate + H(+). The protein operates within cell wall biogenesis; peptidoglycan biosynthesis. In terms of biological role, cell wall formation. The polypeptide is UDP-N-acetylmuramate--L-alanine ligase (Agrobacterium fabrum (strain C58 / ATCC 33970) (Agrobacterium tumefaciens (strain C58))).